Consider the following 320-residue polypeptide: Olfactory receptor 5C1 (320 aa).

Residues 1–29 (MNSENLTRAAVAPAEFVLLGITNRWDLRV) are Extracellular-facing. N-linked (GlcNAc...) asparagine glycosylation is present at asparagine 5. Residues 30–50 (ALFLTCLPVYLVSLLGNMGMA) traverse the membrane as a helical segment. Residues 51-58 (LLIRMDAR) lie on the Cytoplasmic side of the membrane. The helical transmembrane segment at 59–79 (LHTPMYFFLANLSLLDACYSS) threads the bilayer. The Extracellular portion of the chain corresponds to 80 to 103 (AIGPKMLVDLLLPRATIPYTACAL). A disulfide bridge links cysteine 101 with cysteine 193. The helical transmembrane segment at 104-124 (QMFVFAGLADTECCLLAAMAY) threads the bilayer. The Cytoplasmic portion of the chain corresponds to 125-143 (DRYVAIRNPLLYTTAMSQR). A helical transmembrane segment spans residues 144–164 (LCLALLGASGLGGAVSAFVHT). Residues 165-200 (TLTFRLSFCRSRKINSFFCDIPPLLAISCSDTSLNE) are Extracellular-facing. A helical transmembrane segment spans residues 201 to 221 (LLLFAICGFIQTATVLAITVS). The Cytoplasmic portion of the chain corresponds to 222-241 (YGFIAGAVIHMRSVEGSRRA). A helical membrane pass occupies residues 242 to 262 (ASTGGSHLTAVAMMYGTLIFM). The Extracellular segment spans residues 263–275 (YLRPSSSYALDTD). A helical transmembrane segment spans residues 276 to 296 (KMASVFYTLVIPSLNPLIYSL). Residues 297 to 320 (RNKEVKEALRQTWSRFHCPGQGSQ) lie on the Cytoplasmic side of the membrane.

The protein belongs to the G-protein coupled receptor 1 family.

It localises to the cell membrane. Odorant receptor. The polypeptide is Olfactory receptor 5C1 (OR5C1) (Homo sapiens (Human)).